Reading from the N-terminus, the 383-residue chain is ATP phosphoribosyltransferase regulatory subunit (383 aa).

This sequence belongs to the class-II aminoacyl-tRNA synthetase family. HisZ subfamily. Heteromultimer composed of HisG and HisZ subunits.

The protein localises to the cytoplasm. It functions in the pathway amino-acid biosynthesis; L-histidine biosynthesis; L-histidine from 5-phospho-alpha-D-ribose 1-diphosphate: step 1/9. Functionally, required for the first step of histidine biosynthesis. May allow the feedback regulation of ATP phosphoribosyltransferase activity by histidine. The polypeptide is ATP phosphoribosyltransferase regulatory subunit (Lactiplantibacillus plantarum (strain ATCC BAA-793 / NCIMB 8826 / WCFS1) (Lactobacillus plantarum)).